The following is a 265-amino-acid chain: Indole-3-glycerol phosphate synthase (265 aa).

This sequence belongs to the TrpC family.

It carries out the reaction 1-(2-carboxyphenylamino)-1-deoxy-D-ribulose 5-phosphate + H(+) = (1S,2R)-1-C-(indol-3-yl)glycerol 3-phosphate + CO2 + H2O. The protein operates within amino-acid biosynthesis; L-tryptophan biosynthesis; L-tryptophan from chorismate: step 4/5. The protein is Indole-3-glycerol phosphate synthase of Hyphomonas neptunium (strain ATCC 15444).